A 236-amino-acid chain; its full sequence is Small ribosomal subunit protein uS2c (236 aa).

This sequence belongs to the universal ribosomal protein uS2 family.

Its subcellular location is the plastid. It localises to the chloroplast. The sequence is that of Small ribosomal subunit protein uS2c (rps2) from Triticum aestivum (Wheat).